A 251-amino-acid polypeptide reads, in one-letter code: Small ribosomal subunit protein uS2 (251 aa).

Residues 232 to 251 (EAIAEMDEQVEEDAEEASND) are disordered.

It belongs to the universal ribosomal protein uS2 family.

This is Small ribosomal subunit protein uS2 from Chlorobaculum parvum (strain DSM 263 / NCIMB 8327) (Chlorobium vibrioforme subsp. thiosulfatophilum).